Reading from the N-terminus, the 1166-residue chain is Zinc finger CCHC domain-containing protein 2 (1166 aa).

Disordered regions lie at residues 1-85 (MLRM…GGHA), 205-240 (RAEG…CAKL), 550-668 (SSAD…ARFS), and 904-982 (PASF…ISAV). A compositionally biased stretch (pro residues) spans 43–64 (PPPPPTGLPRGPPPPPSPPRGL). Low complexity predominate over residues 65-76 (EPPVASGPTAGA). Residues 214–223 (EDEPSGDGEQ) show a composition bias toward acidic residues. The span at 572–587 (PQVEKEKVKKTEDRLN) shows a compositional bias: basic and acidic residues. A compositionally biased stretch (low complexity) spans 624–633 (SSESYSSPSS). Over residues 634 to 653 (PRHDGRESLESEEEKDRDSD) the composition is skewed to basic and acidic residues. A compositionally biased stretch (polar residues) spans 919–947 (LPTQNSSALNAATSAQPASTGISPSQSTV). A compositionally biased stretch (pro residues) spans 949–963 (PAVPTHTPGPAPSPS). The segment covering 964 to 982 (PALTHSTAQSDSTSYISAV) has biased composition (polar residues). The CCHC-type zinc finger occupies 1119–1136 (VSCYNCGVSGHYAQDCKQ).

This chain is Zinc finger CCHC domain-containing protein 2 (Zcchc2), found in Mus musculus (Mouse).